Reading from the N-terminus, the 245-residue chain is Epoxyqueuosine reductase QueH (245 aa).

[4Fe-4S] cluster contacts are provided by Cys-52, Cys-53, Cys-131, and Cys-134. A disulfide bridge connects residues Cys-214 and Cys-216.

The protein belongs to the QueH family.

The enzyme catalyses epoxyqueuosine(34) in tRNA + AH2 = queuosine(34) in tRNA + A + H2O. Its pathway is tRNA modification; tRNA-queuosine biosynthesis. Its function is as follows. Catalyzes the conversion of epoxyqueuosine (oQ) to queuosine (Q), which is a hypermodified base found in the wobble positions of tRNA(Asp), tRNA(Asn), tRNA(His) and tRNA(Tyr). This chain is Epoxyqueuosine reductase QueH, found in Haemophilus influenzae (strain ATCC 51907 / DSM 11121 / KW20 / Rd).